A 326-amino-acid chain; its full sequence is dTDP-4-dehydro-6-deoxy-D-allose reductase (326 aa).

NADP(+)-binding positions include 15–21 and 129–132; these read GALGFIG and MSSS. The Proton donor/acceptor role is filled by Y160. Residues K164 and 187–190 each bind NADP(+); that span reads PGNV.

The protein belongs to the NAD(P)-dependent epimerase/dehydratase family.

The catalysed reaction is dTDP-6-deoxy-alpha-D-allose + NAD(+) = dTDP-4-dehydro-6-deoxy-alpha-D-allose + NADH + H(+). It carries out the reaction dTDP-6-deoxy-alpha-D-allose + NADP(+) = dTDP-4-dehydro-6-deoxy-alpha-D-allose + NADPH + H(+). In terms of biological role, catalyzes the stereospecific reduction of the C-4 keto group of dTDP-4-dehydro-6-deoxy-D-allose, leading to dTDP-6-deoxy-D-allose, an intermediate in the biosynthesis of the mycinose moiety of the chalcomycin antibiotic. This chain is dTDP-4-dehydro-6-deoxy-D-allose reductase (chmD), found in Streptomyces bikiniensis.